The chain runs to 396 residues: Phosphoglycerate kinase (396 aa).

Residues 21–23 (DFN), Arg36, 59–62 (HLGK), Arg119, and Arg156 contribute to the substrate site. ATP contacts are provided by residues Lys206, Glu325, and 352 to 355 (GGDS).

It belongs to the phosphoglycerate kinase family. Monomer.

It is found in the cytoplasm. It catalyses the reaction (2R)-3-phosphoglycerate + ATP = (2R)-3-phospho-glyceroyl phosphate + ADP. It participates in carbohydrate degradation; glycolysis; pyruvate from D-glyceraldehyde 3-phosphate: step 2/5. The protein is Phosphoglycerate kinase of Macrococcus caseolyticus (strain JCSC5402) (Macrococcoides caseolyticum).